We begin with the raw amino-acid sequence, 580 residues long: Proline--tRNA ligase (580 aa).

The protein belongs to the class-II aminoacyl-tRNA synthetase family. ProS type 1 subfamily. In terms of assembly, homodimer.

Its subcellular location is the cytoplasm. It carries out the reaction tRNA(Pro) + L-proline + ATP = L-prolyl-tRNA(Pro) + AMP + diphosphate. Catalyzes the attachment of proline to tRNA(Pro) in a two-step reaction: proline is first activated by ATP to form Pro-AMP and then transferred to the acceptor end of tRNA(Pro). As ProRS can inadvertently accommodate and process non-cognate amino acids such as alanine and cysteine, to avoid such errors it has two additional distinct editing activities against alanine. One activity is designated as 'pretransfer' editing and involves the tRNA(Pro)-independent hydrolysis of activated Ala-AMP. The other activity is designated 'posttransfer' editing and involves deacylation of mischarged Ala-tRNA(Pro). The misacylated Cys-tRNA(Pro) is not edited by ProRS. This chain is Proline--tRNA ligase, found in Polynucleobacter necessarius subsp. necessarius (strain STIR1).